The following is a 116-amino-acid chain: Large ribosomal subunit protein uL18 (116 aa).

Belongs to the universal ribosomal protein uL18 family. As to quaternary structure, part of the 50S ribosomal subunit; part of the 5S rRNA/L5/L18/L25 subcomplex. Contacts the 5S and 23S rRNAs.

This is one of the proteins that bind and probably mediate the attachment of the 5S RNA into the large ribosomal subunit, where it forms part of the central protuberance. This Shewanella baltica (strain OS223) protein is Large ribosomal subunit protein uL18.